The sequence spans 405 residues: MQYSEIMVRYGELSTKGKNRQAFIGRLNGNVTRALHEFPNLTIRPKRDRMHIELNGEPSDQVMARLSQVFGIQNFSPSIAVEKDMDKVHAVALQLMNETAPKGISYKVNTRRSDHDFALDTNAMNLDLGDYLTDKRPDLVVKMHQPDMILRVEVRREAIYLSTKTIQGAGGLPVGTAGKAALMLSGGIDSPVAGYYALKRGVDIEMVHFFSPPYTSQQALNKAKQLTAKLTPYVGRIYFIEVPFTEIQEEIKAKVPEGYLMTVQRRLMLRLTEAIAQQRGDLAIFNGESVGQVASQTLESMAAINDVTTMPIIRPVATMDKNEIIAEAEKIDTYDLSIMPFEDCCTIFAPPSPKTKPKTDRARYYESKIDVAGLMDRALAGVKIQEIKSSDQFMNQDQDVIAELL.

One can recognise a THUMP domain in the interval 60–165 (DQVMARLSQV…REAIYLSTKT (106 aa)). ATP-binding positions include 183–184 (ML), 208–209 (HF), Arg-265, Gly-287, and Gln-296.

It belongs to the ThiI family.

Its subcellular location is the cytoplasm. The enzyme catalyses [ThiI sulfur-carrier protein]-S-sulfanyl-L-cysteine + a uridine in tRNA + 2 reduced [2Fe-2S]-[ferredoxin] + ATP + H(+) = [ThiI sulfur-carrier protein]-L-cysteine + a 4-thiouridine in tRNA + 2 oxidized [2Fe-2S]-[ferredoxin] + AMP + diphosphate. It catalyses the reaction [ThiS sulfur-carrier protein]-C-terminal Gly-Gly-AMP + S-sulfanyl-L-cysteinyl-[cysteine desulfurase] + AH2 = [ThiS sulfur-carrier protein]-C-terminal-Gly-aminoethanethioate + L-cysteinyl-[cysteine desulfurase] + A + AMP + 2 H(+). It functions in the pathway cofactor biosynthesis; thiamine diphosphate biosynthesis. Its function is as follows. Catalyzes the ATP-dependent transfer of a sulfur to tRNA to produce 4-thiouridine in position 8 of tRNAs, which functions as a near-UV photosensor. Also catalyzes the transfer of sulfur to the sulfur carrier protein ThiS, forming ThiS-thiocarboxylate. This is a step in the synthesis of thiazole, in the thiamine biosynthesis pathway. The sulfur is donated as persulfide by IscS. In Lacticaseibacillus paracasei (strain ATCC 334 / BCRC 17002 / CCUG 31169 / CIP 107868 / KCTC 3260 / NRRL B-441) (Lactobacillus paracasei), this protein is Probable tRNA sulfurtransferase.